A 1606-amino-acid chain; its full sequence is Thrombospondin type-1 domain-containing protein 7B (1606 aa).

An N-terminal signal peptide occupies residues 1–31 (MFPKSNLTVTCWVWRSMRKLFLLLSLLLSHA). Over 32–1555 (AHLEGKKDNQ…QPLDPDGRVK (1524 aa)) the chain is Extracellular. TSP type-1 domains follow at residues 40–98 (NQFI…RVCD), 102–177 (DLFQ…IPCP), 179–233 (DCVV…ISCP), 336–392 (DCET…IVEG), 399–482 (PRYS…IPCS), 484–543 (DCIV…PMCY), 601–661 (DCVL…HSCM), 662–735 (QLHW…LPCK), 737–796 (DCIV…SLCP), 797–869 (VYRW…VPCR), 871–924 (DCTF…CPCD), 925–998 (EFIS…IPCP), 1000–1125 (DCKL…LMCP), 1127–1181 (ECVM…ENCF), 1182–1245 (QFQY…VECV), 1247–1302 (NCQL…TPCY), 1303–1368 (SWVL…VPCP), and 1370–1431 (DCHL…GKCY). N-linked (GlcNAc...) asparagine glycosylation is found at Asn150, Asn190, and Asn219. 3 disulfides stabilise this stretch: Cys411-Cys477, Cys431-Cys481, and Cys442-Cys466. 3 disulfide bridges follow: Cys602–Cys643, Cys613–Cys617, and Cys655–Cys660. A glycan (N-linked (GlcNAc...) asparagine) is linked at Asn683. Cystine bridges form between Cys738-Cys779, Cys749-Cys753, and Cys789-Cys795. The N-linked (GlcNAc...) asparagine glycan is linked to Asn757. The N-linked (GlcNAc...) asparagine glycan is linked to Asn842. 3 disulfides stabilise this stretch: Cys872-Cys907, Cys883-Cys887, and Cys921-Cys923. N-linked (GlcNAc...) asparagine glycosylation is present at Asn933. Disulfide bonds link Cys937-Cys993, Cys959-Cys997, Cys970-Cys983, Cys1001-Cys1038, Cys1012-Cys1016, and Cys1120-Cys1124. Asn1186 is a glycosylation site (N-linked (GlcNAc...) asparagine). Cystine bridges form between Cys1248/Cys1286, Cys1259/Cys1263, and Cys1296/Cys1301. An N-linked (GlcNAc...) asparagine glycan is attached at Asn1308. Cystine bridges form between Cys1371-Cys1415, Cys1382-Cys1386, and Cys1425-Cys1430. Asn1456 and Asn1524 each carry an N-linked (GlcNAc...) asparagine glycan. A helical transmembrane segment spans residues 1556–1576 (IWVYGVSGGAFLIMIFLIFTS). Over 1577–1606 (YLVCKKPKPHQSTPPQQKPLTLAYDGDLDM) the chain is Cytoplasmic. The segment at 1583–1606 (PKPHQSTPPQQKPLTLAYDGDLDM) is disordered. Residues 1586-1595 (HQSTPPQQKP) are compositionally biased toward polar residues.

It localises to the membrane. This Homo sapiens (Human) protein is Thrombospondin type-1 domain-containing protein 7B.